Reading from the N-terminus, the 562-residue chain is Delta-1-pyrroline-5-carboxylate dehydrogenase, mitochondrial (562 aa).

A mitochondrion-targeting transit peptide spans 1-23; the sequence is MLPLPSLRRSLLSHAWRGAGLRW. Lysine 30 carries the N6-succinyllysine modification. Residue serine 43 is modified to Phosphoserine. Lysine 51 is subject to N6-acetyllysine. Residues lysine 92, lysine 98, lysine 113, lysine 129, and lysine 174 each carry the N6-acetyllysine; alternate modification. N6-succinyllysine; alternate occurs at positions 92, 98, 113, 129, and 174. NAD(+)-binding positions include serine 207, lysine 232, and 285–289; that span reads GSVPT. The Proton acceptor role is filled by glutamate 313. Lysine 317 is subject to N6-acetyllysine. An N6-succinyllysine modification is found at lysine 346. Cysteine 347 (nucleophile) is an active-site residue. Lysine 357 is modified (N6-acetyllysine; alternate). An N6-succinyllysine; alternate modification is found at lysine 357. N6-acetyllysine is present on residues lysine 364 and lysine 375. The residue at position 394 (lysine 394) is an N6-succinyllysine. Residue glutamate 446 participates in NAD(+) binding. N6-acetyllysine is present on lysine 461. Lysine 508 bears the N6-acetyllysine; alternate mark. Lysine 508 is subject to N6-succinyllysine; alternate. A substrate-binding site is contributed by serine 512. An N6-acetyllysine mark is found at lysine 530 and lysine 551.

The protein belongs to the aldehyde dehydrogenase family. As to quaternary structure, homodimer. Post-translationally, acetylation of Lys-98, Lys-113 and Lys-401 is observed in liver mitochondria from fasted mice but not from fed mice.

Its subcellular location is the mitochondrion matrix. It carries out the reaction L-glutamate 5-semialdehyde + NAD(+) + H2O = L-glutamate + NADH + 2 H(+). The protein operates within amino-acid degradation; L-proline degradation into L-glutamate; L-glutamate from L-proline: step 2/2. Its function is as follows. Irreversible conversion of delta-1-pyrroline-5-carboxylate (P5C), derived either from proline or ornithine, to glutamate. This is a necessary step in the pathway interconnecting the urea and tricarboxylic acid cycles. The preferred substrate is glutamic gamma-semialdehyde, other substrates include succinic, glutaric and adipic semialdehydes. In Mus musculus (Mouse), this protein is Delta-1-pyrroline-5-carboxylate dehydrogenase, mitochondrial (Aldh4a1).